We begin with the raw amino-acid sequence, 33 residues long: Helofensin-1 (33 aa).

This sequence belongs to the beta-defensin family. Helofensin subfamily. Expressed by the venom gland.

The protein localises to the secreted. In terms of biological role, lethal toxin which possesses an inhibitory effect on direct electrical stimulation of the isolated hemi-diaphragm. Neither hemorrhagic nor hemolytic activities are detected. Phospholipase A2 activity, proteolytic activity and arginine esterolytic activity are absent. In Heloderma horridum horridum (Mexican beaded lizard), this protein is Helofensin-1.